We begin with the raw amino-acid sequence, 259 residues long: Putative zinc metalloprotease Rip2 (259 aa).

A run of 2 helical transmembrane segments spans residues P14 to G34 and P39 to L59. Residue H60 coordinates Zn(2+). Residue E61 is part of the active site. Residue H64 coordinates Zn(2+). 4 consecutive transmembrane segments (helical) span residues G97 to V117, T128 to A148, I156 to V176, and L215 to F235.

Belongs to the peptidase M50B family. Zn(2+) serves as cofactor.

Its subcellular location is the cell membrane. The protein is Putative zinc metalloprotease Rip2 (rip2) of Mycobacterium tuberculosis (strain ATCC 35801 / TMC 107 / Erdman).